The following is a 685-amino-acid chain: Nucleolar protein 4 (685 aa).

A disordered region spans residues 1 to 21 (MEETIENVEVPSSNVSKQNDD). The RRM 1 domain occupies 26 to 103 (KTLFVRSIPQ…HILRVDIAKR (78 aa)). The segment covering 106–123 (RSKKTSEVVEKSTPESSE) has biased composition (basic and acidic residues). A disordered region spans residues 106-142 (RSKKTSEVVEKSTPESSEKITGQNNEDEDDADGEDSM). Over residues 130 to 140 (NEDEDDADGED) the composition is skewed to acidic residues. An RRM 2 domain is found at 147-225 (PKLIIRNMPW…RKVAVDFAVQ (79 aa)). The segment covering 231 to 242 (DYKKAQPEMNDK) has biased composition (basic and acidic residues). The tract at residues 231 to 285 (DYKKAQPEMNDKDDNESGNEDAEENHDDEEDENEEEDRQVDQASKNKESKRKAQN) is disordered. Residues 243-268 (DDNESGNEDAEENHDDEEDENEEEDR) are compositionally biased toward acidic residues. Residue Ser247 is modified to Phosphoserine. 2 consecutive RRM domains span residues 290 to 383 (FSVF…PTLV) and 462 to 612 (TRLA…FAIE). At Thr379 the chain carries Phosphothreonine. Positions 622–631 (EQLKQARTKR) are enriched in basic residues. The interval 622 to 685 (EQLKQARTKR…FKRKRKHAKK (64 aa)) is disordered. The segment covering 645–672 (SENKKPKKEEATTPTNPDDKKMGDDIKR) has biased composition (basic and acidic residues). Residues 674–685 (IGFKRKRKHAKK) are compositionally biased toward basic residues.

As to quaternary structure, interacts with NOP1.

It localises to the nucleus. The protein localises to the nucleolus. Its function is as follows. Required for 60S ribosomal subunit synthesis. Probably involved in the processing of 27S rRNA to produce mature 25S rRNA. The sequence is that of Nucleolar protein 4 (NOP4) from Saccharomyces cerevisiae (strain ATCC 204508 / S288c) (Baker's yeast).